The following is a 480-amino-acid chain: Coronin-2B (480 aa).

5 WD repeats span residues 85 to 125, 135 to 177, 179 to 217, 220 to 263, and 265 to 308; these read GHQG…LKRN, GHSR…KMID, HRDVILCMSFNTDGSLLATTCKDKKLRVLEPRSGRVLQE, CKTH…MPVT, and EEID…PYLT. A coiled-coil region spans residues 436 to 475; that stretch reads NELLRMFFRQQEEIRRLKEQLSQRDLLVRQLELELKNLRN.

The protein belongs to the WD repeat coronin family.

It is found in the cytoplasm. Its subcellular location is the cytoskeleton. In terms of biological role, may play a role in the reorganization of neuronal actin structure. The sequence is that of Coronin-2B (coro2b) from Xenopus tropicalis (Western clawed frog).